The following is a 141-amino-acid chain: Large ribosomal subunit protein uL11 (141 aa).

Belongs to the universal ribosomal protein uL11 family. Part of the ribosomal stalk of the 50S ribosomal subunit. Interacts with L10 and the large rRNA to form the base of the stalk. L10 forms an elongated spine to which L12 dimers bind in a sequential fashion forming a multimeric L10(L12)X complex. In terms of processing, one or more lysine residues are methylated.

Its function is as follows. Forms part of the ribosomal stalk which helps the ribosome interact with GTP-bound translation factors. This is Large ribosomal subunit protein uL11 from Aliarcobacter butzleri (strain RM4018) (Arcobacter butzleri).